A 472-amino-acid polypeptide reads, in one-letter code: DNA-cytosine methyltransferase (472 aa).

Residues 87–457 (FRFIDLFAGI…KLLEPKIKQA (371 aa)) form the SAM-dependent MTase C5-type domain. C177 is an active-site residue.

It belongs to the class I-like SAM-binding methyltransferase superfamily. C5-methyltransferase family.

It catalyses the reaction a 2'-deoxycytidine in DNA + S-adenosyl-L-methionine = a 5-methyl-2'-deoxycytidine in DNA + S-adenosyl-L-homocysteine + H(+). This methylase recognizes the double-stranded sequence 5'-CCWGG-3', methylates C-2 on both strands. The chain is DNA-cytosine methyltransferase (dcm) from Escherichia coli O157:H7.